The sequence spans 63 residues: Small ribosomal subunit protein eS17 (63 aa).

It belongs to the eukaryotic ribosomal protein eS17 family.

This is Small ribosomal subunit protein eS17 from Methanococcus maripaludis (strain C6 / ATCC BAA-1332).